Here is a 558-residue protein sequence, read N- to C-terminus: Potassium-transporting ATPase potassium-binding subunit 1 (558 aa).

12 helical membrane passes run 1–21, 66–86, 127–147, 166–186, 245–265, 281–301, 327–347, 354–374, 377–397, 416–436, 482–502, and 531–551; these read MEII…SGYL, FNGF…WLFL, MIVM…VCIA, IVRF…ILLM, IWSN…MLFL, ALIL…LTMW, FGAG…TGSV, LTPI…VFGG, VGLM…SLMV, IVLV…LAFM, ISTG…QLMI, and IVFI…LGPI.

The protein belongs to the KdpA family. As to quaternary structure, the system is composed of three essential subunits: KdpA, KdpB and KdpC.

It localises to the cell membrane. Part of the high-affinity ATP-driven potassium transport (or Kdp) system, which catalyzes the hydrolysis of ATP coupled with the electrogenic transport of potassium into the cytoplasm. This subunit binds the extracellular potassium ions and delivers the ions to the membrane domain of KdpB through an intramembrane tunnel. The polypeptide is Potassium-transporting ATPase potassium-binding subunit 1 (Staphylococcus aureus (strain Mu50 / ATCC 700699)).